A 124-amino-acid chain; its full sequence is Fluoride-specific ion channel FluC (124 aa).

Helical transmembrane passes span 4-24 (ILFV…ISIF), 35-55 (FGTL…YALG), 70-90 (VGLL…LLLI), and 95-115 (WLKA…MVYL). Positions 74 and 77 each coordinate Na(+).

It belongs to the fluoride channel Fluc/FEX (TC 1.A.43) family.

The protein resides in the cell inner membrane. The enzyme catalyses fluoride(in) = fluoride(out). With respect to regulation, na(+) is not transported, but it plays an essential structural role and its presence is essential for fluoride channel function. Functionally, fluoride-specific ion channel. Important for reducing fluoride concentration in the cell, thus reducing its toxicity. This is Fluoride-specific ion channel FluC from Shewanella woodyi (strain ATCC 51908 / MS32).